Reading from the N-terminus, the 651-residue chain is Bromodomain-containing protein 7 (651 aa).

2 disordered regions span residues 36-133 (ELST…EVEQ) and 257-298 (KDKV…KKKD). Over residues 58–69 (HKDRKRKKRKKG) the composition is skewed to basic residues. A Nuclear localization signal motif is present at residues 65 to 96 (KRKKGEKQVPGEEKEKRKRKVKEDKRKRDREH). Residues 70–105 (EKQVPGEEKEKRKRKVKEDKRKRDREHPDSEGEQEL) are compositionally biased toward basic and acidic residues. Positions 131–235 (VEQTPLQEAL…HSGMKILSQE (105 aa)) constitute a Bromo domain. Positions 271 to 298 (GSGKDKGEPVDGDTKAFKTPNKEHKKKD) are enriched in basic and acidic residues. A coiled-coil region spans residues 533 to 564 (SEEAEIFQRKLDETTKLLRELQDAQNERLSTK).

It is found in the nucleus. Its subcellular location is the chromosome. Its function is as follows. Acts both as coactivator and as corepressor. May play a role in chromatin remodeling. Participates in the Wnt signaling pathway. Transcriptional corepressor that down-regulates the expression of target genes. Binds to target promoters, leading to increased histone H3 acetylation. Coactivator for TP53-mediated activation of transcription of a set of target genes. Required for TP53-mediated cell-cycle arrest in response to oncogene activation. Inhibits cell cycle progression from G1 to S phase. In Gallus gallus (Chicken), this protein is Bromodomain-containing protein 7 (BRD7).